The following is a 72-amino-acid chain: Alpha-elapitoxin-Dpp2d (72 aa).

5 disulfide bridges follow: C3–C21, C14–C42, C27–C31, C46–C57, and C58–C63. The residue at position 72 (R72) is an Arginine amide.

Belongs to the three-finger toxin family. Long-chain subfamily. Type II alpha-neurotoxin sub-subfamily. As to quaternary structure, monomer (predominant). Post-translationally, amidation does not significantly affect toxin selectivity, since the activity profile and binding data are reminiscent of classical long-chain 3-finger toxins with a free carboxyl termini. In terms of tissue distribution, expressed by the venom gland.

It is found in the secreted. Binds with high affinity to muscular (IC(50)=114 nM) and neuronal (alpha-7/CHRNA7) (IC(50)=58 nM) nicotinic acetylcholine receptor (nAChR) and inhibits acetylcholine from binding to the receptor, thereby impairing neuromuscular and neuronal transmission. Competitive radioligand binding assays also demonstrate that this toxin competes with epibatidine binding to the Lymnaea stagnalis acetylcholine-binding protein (Ls-AChBP) (IC(50)=4.9 nM). The sequence is that of Alpha-elapitoxin-Dpp2d from Dendroaspis polylepis polylepis (Black mamba).